Here is a 157-residue protein sequence, read N- to C-terminus: Transcriptional regulator MraZ (157 aa).

2 consecutive SpoVT-AbrB domains span residues 7-54 (TYTM…GTSL) and 83-126 (TEML…EPER).

The protein belongs to the MraZ family. In terms of assembly, forms oligomers.

The protein resides in the cytoplasm. The protein localises to the nucleoid. The polypeptide is Transcriptional regulator MraZ (Azorhizobium caulinodans (strain ATCC 43989 / DSM 5975 / JCM 20966 / LMG 6465 / NBRC 14845 / NCIMB 13405 / ORS 571)).